A 496-amino-acid chain; its full sequence is Cytochrome P450 71A15 (496 aa).

A helical transmembrane segment spans residues 3–23 (IIIISLCLATILAFLLLKPLL). Cysteine 439 is a heme binding site.

It belongs to the cytochrome P450 family. It depends on heme as a cofactor.

The protein localises to the membrane. This Arabidopsis thaliana (Mouse-ear cress) protein is Cytochrome P450 71A15 (CYP71A15).